Here is a 326-residue protein sequence, read N- to C-terminus: Membrane-associated kinase regulator 5 (326 aa).

Disordered stretches follow at residues 188–239 (TKKQ…GMSP) and 267–326 (GSRE…KISD). Low complexity-rich tracts occupy residues 190 to 202 (KQSS…PTSS) and 270 to 305 (ESSL…SSDS).

In terms of tissue distribution, expressed in roots.

It is found in the cell membrane. The protein localises to the cytoplasm. The protein resides in the cytosol. Its function is as follows. Positive effector of CLE45 peptide signaling. Post-transcriptionally regulated amplifier of the CLE45 peptide signal that acts downstream of BAM3 in the regulation of the transition of root protophloem cells from proliferation to differentiation; thus preventing primary root elongation but stimulating lateral roots development. This Arabidopsis thaliana (Mouse-ear cress) protein is Membrane-associated kinase regulator 5.